The sequence spans 98 residues: NADH-ubiquinone oxidoreductase chain 4L (98 aa).

The next 3 membrane-spanning stretches (helical) occupy residues 1 to 21 (MSMV…GLLV), 29 to 49 (SLLC…ITIL), and 61 to 81 (IILL…LVMV).

Belongs to the complex I subunit 4L family. As to quaternary structure, core subunit of respiratory chain NADH dehydrogenase (Complex I) which is composed of 45 different subunits.

It is found in the mitochondrion inner membrane. It catalyses the reaction a ubiquinone + NADH + 5 H(+)(in) = a ubiquinol + NAD(+) + 4 H(+)(out). Its function is as follows. Core subunit of the mitochondrial membrane respiratory chain NADH dehydrogenase (Complex I) which catalyzes electron transfer from NADH through the respiratory chain, using ubiquinone as an electron acceptor. Part of the enzyme membrane arm which is embedded in the lipid bilayer and involved in proton translocation. This chain is NADH-ubiquinone oxidoreductase chain 4L (MT-ND4L), found in Mephitis mephitis (Striped skunk).